Consider the following 249-residue polypeptide: tRNA (guanine-N(1)-)-methyltransferase (249 aa).

S-adenosyl-L-methionine is bound by residues Gly-121 and 141-146; that span reads LGDFVL.

It belongs to the RNA methyltransferase TrmD family. Homodimer.

Its subcellular location is the cytoplasm. The enzyme catalyses guanosine(37) in tRNA + S-adenosyl-L-methionine = N(1)-methylguanosine(37) in tRNA + S-adenosyl-L-homocysteine + H(+). Functionally, specifically methylates guanosine-37 in various tRNAs. This is tRNA (guanine-N(1)-)-methyltransferase from Cereibacter sphaeroides (strain KD131 / KCTC 12085) (Rhodobacter sphaeroides).